A 1783-amino-acid chain; its full sequence is Trans-splicing factor Raa3, chloroplastic (1783 aa).

Residues 1–40 (MKADLATAKGSSPAFSAPRTYRARLLSRCLNKCFNTVLVS) constitute a chloroplast transit peptide. 8 disordered regions span residues 97–378 (ATTH…VGVN), 420–484 (ATSA…VAAQ), 563–610 (ARVG…SATK), 652–709 (STEP…SPAA), 918–971 (AAPT…QRAS), 1395–1427 (RDAK…QQHQ), 1476–1506 (PAPA…RRSR), and 1620–1639 (VKGR…DVQG). The segment covering 105-118 (DSGGQGPAAAGGRG) has biased composition (gly residues). Low complexity-rich tracts occupy residues 126 to 157 (QAAA…PQRP), 186 to 205 (AVDA…PAPA), and 224 to 242 (AGKP…VGPQ). Residues 256 to 273 (DESHMGLTHRDQGHDERI) are compositionally biased toward basic and acidic residues. Positions 277–289 (AGEAWKAGAVAAP) are enriched in low complexity. Polar residues predominate over residues 307–316 (LASSALGTHS). Low complexity-rich tracts occupy residues 343 to 374 (SGSS…ITSN), 420 to 436 (ATSA…SSSS), 577 to 599 (RPVQ…SQPG), 655 to 669 (PLAA…ASAS), 676 to 709 (SSSN…SPAA), 928 to 970 (SAAA…PQRA), and 1403 to 1417 (QSAA…AAQD). Composition is skewed to basic residues over residues 1494-1506 (KSRR…RRSR) and 1620-1630 (VKGRGRGRRTA). An RAP domain is found at 1713–1772 (LAVGAAAGGAVIRNSRWLLSGAGALRRRLLTHAGWLVVPVRERQWKDLRSAEQQRRVVRE).

In terms of assembly, part of a 1700 kDa complex that includes the precursor RNA to exon 1 and the tscA RNA.

It is found in the plastid. It localises to the chloroplast stroma. In terms of biological role, required for trans-splicing of exons 1 and 2 of the chloroplast encoded psaA mRNA (a group II intron). May be required for stability of the chloroplast RNA-protein complex in which it is found. The chain is Trans-splicing factor Raa3, chloroplastic (RAA3) from Chlamydomonas reinhardtii (Chlamydomonas smithii).